Here is a 183-residue protein sequence, read N- to C-terminus: Probable RNA 2'-phosphotransferase (183 aa).

It belongs to the KptA/TPT1 family.

Functionally, removes the 2'-phosphate from RNA via an intermediate in which the phosphate is ADP-ribosylated by NAD followed by a presumed transesterification to release the RNA and generate ADP-ribose 1''-2''-cyclic phosphate (APPR&gt;P). May function as an ADP-ribosylase. In Pyrococcus furiosus (strain ATCC 43587 / DSM 3638 / JCM 8422 / Vc1), this protein is Probable RNA 2'-phosphotransferase.